A 109-amino-acid chain; its full sequence is Large ribosomal subunit protein uL22 (109 aa).

The protein belongs to the universal ribosomal protein uL22 family. Part of the 50S ribosomal subunit.

Its function is as follows. This protein binds specifically to 23S rRNA; its binding is stimulated by other ribosomal proteins, e.g. L4, L17, and L20. It is important during the early stages of 50S assembly. It makes multiple contacts with different domains of the 23S rRNA in the assembled 50S subunit and ribosome. In terms of biological role, the globular domain of the protein is located near the polypeptide exit tunnel on the outside of the subunit, while an extended beta-hairpin is found that lines the wall of the exit tunnel in the center of the 70S ribosome. The sequence is that of Large ribosomal subunit protein uL22 from Polaromonas sp. (strain JS666 / ATCC BAA-500).